A 332-amino-acid polypeptide reads, in one-letter code: UPF0194 membrane protein YbhG (332 aa).

The first 16 residues, 1-16 (MMKKPVVIGLAVVVLA), serve as a signal peptide directing secretion. Positions 108 to 209 (EEIAQAAAAV…LNLQDSTLIA (102 aa)) form a coiled coil.

The protein belongs to the UPF0194 family.

The protein localises to the periplasm. This is UPF0194 membrane protein YbhG from Shigella boydii serotype 4 (strain Sb227).